Here is a 255-residue protein sequence, read N- to C-terminus: Probable transcriptional regulatory protein Rcas_0718 (255 aa).

The protein belongs to the TACO1 family.

The protein localises to the cytoplasm. The polypeptide is Probable transcriptional regulatory protein Rcas_0718 (Roseiflexus castenholzii (strain DSM 13941 / HLO8)).